The sequence spans 651 residues: DNA mismatch repair protein MutL (651 aa).

The disordered stretch occupies residues 336 to 398 (RLDMTEPETG…ANSGYQPENP (63 aa)). Residues 385-394 (ARESANSGYQ) show a composition bias toward polar residues.

Belongs to the DNA mismatch repair MutL/HexB family.

In terms of biological role, this protein is involved in the repair of mismatches in DNA. It is required for dam-dependent methyl-directed DNA mismatch repair. May act as a 'molecular matchmaker', a protein that promotes the formation of a stable complex between two or more DNA-binding proteins in an ATP-dependent manner without itself being part of a final effector complex. The chain is DNA mismatch repair protein MutL from Pectobacterium atrosepticum (strain SCRI 1043 / ATCC BAA-672) (Erwinia carotovora subsp. atroseptica).